Consider the following 486-residue polypeptide: MTVKSQQQIIDSFKQANQDQLFQYYDSLTIDQQQEFIDQLSTIEEPAKLISTVEQAIQFSQTNSTSRNFTQLPNEQTASTLDLSKDILQNWTELGLKAIGNGEVAVLLMAGGQGTRLGSSAPKGCFNIELPSQKSLFQIQAEKILKIEQLAQQYLKSTKKPIINWYIMTSGPTRNATESFFIENNYFGLNSHQVIFFNQGTLPCFNLQGNKILLESKNSICQSPDGNGGLYKALKDNGILDDLNSKGIKHIHMYCVDNCLVKVADPIFIGFAIAKKFDLATKVVRKRDANESVGLIVLDQDNQKPCVIEYSEISQELANKKDPQDSSKLFLRAANIVNHYYSVEFLNKMIPKWISSQKYLPFHIAKKKIPSLNLENGEFYKPTEPNGIKLEQFIFDVFPSVELNKFGCLEVDRLDEFSPLKNADGAKNDTPTTCRNHYLERSSKWVIQNGGVIDNQGLVEVDSKTSYGGEGLEFVNGKHFKNGDII.

Positions 109-112 match the Substrate binding motif; the sequence is MAGG. UTP contacts are provided by residues 109–112, K123, Q199, and G226; that span reads MAGG. N227 is a substrate binding site. D257 contributes to the UTP binding site. The short motif at 309-310 is the Substrate binding element; it reads EY. K389 is a UTP binding site. K421 is a substrate binding site.

It belongs to the UDPGP type 1 family.

The protein resides in the cytoplasm. The catalysed reaction is N-acetyl-alpha-D-glucosamine 1-phosphate + UTP + H(+) = UDP-N-acetyl-alpha-D-glucosamine + diphosphate. It participates in nucleotide-sugar biosynthesis; UDP-N-acetyl-alpha-D-glucosamine biosynthesis; UDP-N-acetyl-alpha-D-glucosamine from N-acetyl-alpha-D-glucosamine 1-phosphate: step 1/1. In Candida albicans (Yeast), this protein is UDP-N-acetylglucosamine pyrophosphorylase (UAP1).